Consider the following 583-residue polypeptide: Aspartate--tRNA ligase (583 aa).

Glutamate 174 contacts L-aspartate. The tract at residues 198–201 (QITK) is aspartate. Arginine 220 contacts L-aspartate. Residues 220–222 (RDE) and glutamine 229 each bind ATP. An L-aspartate-binding site is contributed by histidine 443. An ATP-binding site is contributed by glutamate 477. Arginine 484 contacts L-aspartate. An ATP-binding site is contributed by 529-532 (GLDR).

Belongs to the class-II aminoacyl-tRNA synthetase family. Type 1 subfamily. Homodimer.

The protein localises to the cytoplasm. It catalyses the reaction tRNA(Asp) + L-aspartate + ATP = L-aspartyl-tRNA(Asp) + AMP + diphosphate. In terms of biological role, catalyzes the attachment of L-aspartate to tRNA(Asp) in a two-step reaction: L-aspartate is first activated by ATP to form Asp-AMP and then transferred to the acceptor end of tRNA(Asp). The polypeptide is Aspartate--tRNA ligase (Streptococcus agalactiae serotype Ia (strain ATCC 27591 / A909 / CDC SS700)).